Reading from the N-terminus, the 505-residue chain is L-arabinose isomerase (505 aa).

Residues Glu310, Glu337, His354, and His453 each contribute to the Mn(2+) site.

This sequence belongs to the arabinose isomerase family. Requires Mn(2+) as cofactor.

It carries out the reaction beta-L-arabinopyranose = L-ribulose. It functions in the pathway carbohydrate degradation; L-arabinose degradation via L-ribulose; D-xylulose 5-phosphate from L-arabinose (bacterial route): step 1/3. Its function is as follows. Catalyzes the conversion of L-arabinose to L-ribulose. This chain is L-arabinose isomerase, found in Clavibacter sepedonicus (Clavibacter michiganensis subsp. sepedonicus).